The primary structure comprises 353 residues: Sorbitol dehydrogenase (353 aa).

Position 45 (C45) interacts with Zn(2+). A substrate-binding site is contributed by Y51. Positions 70 and 71 each coordinate Zn(2+). E156 is a binding site for substrate. Residues V184, D204, R209, 271 to 273 (VGL), and 296 to 298 (IFR) contribute to the NAD(+) site. 2 residues coordinate substrate: R298 and Y299.

It belongs to the zinc-containing alcohol dehydrogenase family. Homotetramer. Zn(2+) is required as a cofactor.

It catalyses the reaction keto-D-fructose + NADH + H(+) = D-sorbitol + NAD(+). It carries out the reaction xylitol + NAD(+) = D-xylulose + NADH + H(+). The enzyme catalyses L-iditol + NAD(+) = keto-L-sorbose + NADH + H(+). Its function is as follows. Polyol dehydrogenase that catalyzes the NAD(+)-dependent oxidation of various sugar alcohols. Is mostly active with D-sorbitol (D-glucitol), xylitol and L-iditol as substrates, leading to the C2-oxidized products D-fructose, D-xylulose and L-sorbose, respectively. This Bacillus subtilis (strain 168) protein is Sorbitol dehydrogenase.